The following is a 274-amino-acid chain: THAP domain-containing protein 8 (274 aa).

A THAP-type zinc finger spans residues 1 to 85 (MPKYCRAPNC…LRPDAVPSIF (85 aa)). A disordered region spans residues 83 to 121 (SIFSRGPPAKSQRRTRSTQKPVSPPPPLQKNTPLPQSPA).

The sequence is that of THAP domain-containing protein 8 (THAP8) from Homo sapiens (Human).